We begin with the raw amino-acid sequence, 66 residues long: Kappa-flavitoxin (66 aa).

5 disulfides stabilise this stretch: Cys-3–Cys-21, Cys-14–Cys-42, Cys-27–Cys-31, Cys-46–Cys-58, and Cys-59–Cys-64.

Belongs to the three-finger toxin family. Long-chain subfamily. Kappa-neurotoxin sub-subfamily. As to quaternary structure, homo- and heterodimer; non-covalently linked. In terms of tissue distribution, expressed by the venom gland.

Its subcellular location is the secreted. In terms of biological role, postsynaptic neurotoxin that binds and inhibits neuronal nicotinic acetylcholine receptors (nAChR) with high affinity (IC(50)&lt;100 nM). Is a selective, and slowly reversible antagonist of alpha-3/CHRNA3-containing and some alpha-4/CHRNA4-containing AChRs. This chain is Kappa-flavitoxin, found in Bungarus flaviceps flaviceps (Red-headed krait).